The following is a 307-amino-acid chain: Protein FAM76A (307 aa).

2 disordered regions span residues 161 to 181 (SRLS…SSIQ) and 287 to 307 (KQAA…ITSP). Positions 217 to 297 (IIAQLKEEVA…QAAALSKGKK (81 aa)) form a coiled coil.

Belongs to the FAM76 family.

The polypeptide is Protein FAM76A (FAM76A) (Gallus gallus (Chicken)).